The chain runs to 282 residues: Lipoyl synthase (282 aa).

[4Fe-4S] cluster-binding residues include Cys-37, Cys-42, Cys-48, Cys-63, Cys-67, Cys-70, and Ser-274. Positions 49–263 (WGKGTATFMI…KTIGLEKGFS (215 aa)) constitute a Radical SAM core domain.

The protein belongs to the radical SAM superfamily. Lipoyl synthase family. It depends on [4Fe-4S] cluster as a cofactor.

It is found in the cytoplasm. It carries out the reaction [[Fe-S] cluster scaffold protein carrying a second [4Fe-4S](2+) cluster] + N(6)-octanoyl-L-lysyl-[protein] + 2 oxidized [2Fe-2S]-[ferredoxin] + 2 S-adenosyl-L-methionine + 4 H(+) = [[Fe-S] cluster scaffold protein] + N(6)-[(R)-dihydrolipoyl]-L-lysyl-[protein] + 4 Fe(3+) + 2 hydrogen sulfide + 2 5'-deoxyadenosine + 2 L-methionine + 2 reduced [2Fe-2S]-[ferredoxin]. The protein operates within protein modification; protein lipoylation via endogenous pathway; protein N(6)-(lipoyl)lysine from octanoyl-[acyl-carrier-protein]: step 2/2. In terms of biological role, catalyzes the radical-mediated insertion of two sulfur atoms into the C-6 and C-8 positions of the octanoyl moiety bound to the lipoyl domains of lipoate-dependent enzymes, thereby converting the octanoylated domains into lipoylated derivatives. In Bacteroides thetaiotaomicron (strain ATCC 29148 / DSM 2079 / JCM 5827 / CCUG 10774 / NCTC 10582 / VPI-5482 / E50), this protein is Lipoyl synthase.